The chain runs to 319 residues: Ankyrin repeat domain-containing protein 1 (319 aa).

Residues Lys61–Ile89 adopt a coiled-coil conformation. ANK repeat units follow at residues Tyr152–Phe181, Leu185–Ala214, Leu218–Ala247, Glu251–Ile280, and Ala284–Arg315.

In terms of assembly, interacts with YBX1. Interacts with TTN/titin. Mainly expressed in activated vascular endothelial cells. To a lower extent, also expressed in hepatoma cells.

It localises to the nucleus. Functionally, may play an important role in endothelial cell activation. May act as a nuclear transcription factor that negatively regulates the expression of cardiac genes. Induction seems to be correlated with apoptotic cell death in hepatoma cells. This Homo sapiens (Human) protein is Ankyrin repeat domain-containing protein 1 (ANKRD1).